Reading from the N-terminus, the 172-residue chain is Peptidyl-prolyl cis-trans isomerase CYP18-4 (172 aa).

The PPIase cyclophilin-type domain maps to 7–170 (FFDMSLSGTP…KVVTITDCGQ (164 aa)).

This sequence belongs to the cyclophilin-type PPIase family. As to quaternary structure, interacts with A.tumefaciens VirD2. As to expression, ubiquitous, with higher levels in roots and flowers. Confined to vascular tissues. Also detected in stigmas, base of siliques and anthers.

It is found in the cytoplasm. It carries out the reaction [protein]-peptidylproline (omega=180) = [protein]-peptidylproline (omega=0). With respect to regulation, binds cyclosporin A (CsA). CsA mediates some of its effects via an inhibitory action on PPIase. Its function is as follows. PPIases accelerate the folding of proteins. It catalyzes the cis-trans isomerization of proline imidic peptide bonds in oligopeptides. This is Peptidyl-prolyl cis-trans isomerase CYP18-4 (CYP18-4) from Arabidopsis thaliana (Mouse-ear cress).